We begin with the raw amino-acid sequence, 163 residues long: Phosphopantetheine adenylyltransferase (163 aa).

Residue Thr11 participates in substrate binding. ATP-binding positions include Thr11–Phe12 and His19. Residues Lys43, Leu75, and Arg89 each contribute to the substrate site. ATP contacts are provided by residues Gly90–Arg92, Glu100, and Tyr125–Thr131.

Belongs to the bacterial CoaD family. As to quaternary structure, homohexamer. Mg(2+) is required as a cofactor.

The protein resides in the cytoplasm. It catalyses the reaction (R)-4'-phosphopantetheine + ATP + H(+) = 3'-dephospho-CoA + diphosphate. The protein operates within cofactor biosynthesis; coenzyme A biosynthesis; CoA from (R)-pantothenate: step 4/5. In terms of biological role, reversibly transfers an adenylyl group from ATP to 4'-phosphopantetheine, yielding dephospho-CoA (dPCoA) and pyrophosphate. The protein is Phosphopantetheine adenylyltransferase of Aromatoleum aromaticum (strain DSM 19018 / LMG 30748 / EbN1) (Azoarcus sp. (strain EbN1)).